We begin with the raw amino-acid sequence, 620 residues long: Chaperone protein DnaK (620 aa).

Phosphothreonine; by autocatalysis is present on Thr-174. The tract at residues 590–620 is disordered; it reads AAGAGPDMSGAGPQGDTYAGDDVVDGDYREV.

Belongs to the heat shock protein 70 family.

Functionally, acts as a chaperone. The protein is Chaperone protein DnaK of Lachnoclostridium phytofermentans (strain ATCC 700394 / DSM 18823 / ISDg) (Clostridium phytofermentans).